A 123-amino-acid polypeptide reads, in one-letter code: Large ribosomal subunit protein bL17 (123 aa).

It belongs to the bacterial ribosomal protein bL17 family. Part of the 50S ribosomal subunit. Contacts protein L32.

The chain is Large ribosomal subunit protein bL17 from Borreliella burgdorferi (strain ATCC 35210 / DSM 4680 / CIP 102532 / B31) (Borrelia burgdorferi).